Consider the following 472-residue polypeptide: Phosphoglucosamine mutase (472 aa).

S123 serves as the catalytic Phosphoserine intermediate. Mg(2+) contacts are provided by S123, D262, D264, and D266. Residue S123 is modified to Phosphoserine.

The protein belongs to the phosphohexose mutase family. Requires Mg(2+) as cofactor. In terms of processing, activated by phosphorylation.

It carries out the reaction alpha-D-glucosamine 1-phosphate = D-glucosamine 6-phosphate. Catalyzes the conversion of glucosamine-6-phosphate to glucosamine-1-phosphate. The sequence is that of Phosphoglucosamine mutase from Synechococcus elongatus (strain ATCC 33912 / PCC 7942 / FACHB-805) (Anacystis nidulans R2).